The chain runs to 541 residues: Cytochrome P450 monooxygenase claU (541 aa).

Residues 12 to 32 (VIDTLVILFSTWAFLGLIRVI) form a helical membrane-spanning segment. C480 serves as a coordination point for heme.

The protein belongs to the cytochrome P450 family. Heme is required as a cofactor.

Its subcellular location is the membrane. It functions in the pathway secondary metabolite biosynthesis; terpenoid biosynthesis. Its function is as follows. Cytochrome P450 monooxygenase; part of the gene cluster that mediates the biosynthesis of clavilactone A, a meroterpenoid that features a unique benzo-fused ten-membered carbocyclic ring unit with an alpha,beta-epoxy-gamma-lactone moiety, forming an intriguing 10/5/3 tricyclic nested skeleton. Cytochrome P450 monooxygenases claO, claP, claQ, claU, and claW are close orthologs, suggesting that a redundant function or pseudogenes are present in the cla cluster. These monoxygenases are not involved in clavilactone A biosynthesis nor its modification. ClaR, ClaS and ClaT are sufficient to produce clavilactone A. The biosynthesis begins with the prenyltransferase claS that transfers geranyl pyrophosphate (GPP) to hydroquinone to produces geranylhydroquinone. The cytochrome P450 monooxygenase claR then catalyzes the diradical coupling reaction between the intramolecular hydroquinone and allyl moieties to form the benzo-fused ten-membered carbocyclic ring unit of wigantol. Finally the cytochrome P450 monooxygenase claT exquisitely and stereoselectively assembles the alpha,beta-epoxy-gamma-lactone moiety, producing clavilactone A via arnebinol A. This chain is Cytochrome P450 monooxygenase claU, found in Ampulloclitocybe clavipes (Club foot).